Reading from the N-terminus, the 414-residue chain is 26S proteasome regulatory subunit 6B homolog (414 aa).

The tract at residues Met1–Glu33 is disordered. Positions Asn21–Thr30 are enriched in low complexity. Residues Glu55–Val81 are a coiled coil. Gly202–Thr209 contributes to the ATP binding site.

This sequence belongs to the AAA ATPase family.

The protein resides in the cytoplasm. Its subcellular location is the nucleus. Its function is as follows. The 26S proteasome is involved in the ATP-dependent degradation of ubiquitinated proteins. The regulatory (or ATPase) complex confers ATP dependency and substrate specificity to the 26S complex. This Helianthus annuus (Common sunflower) protein is 26S proteasome regulatory subunit 6B homolog.